The chain runs to 448 residues: Histidinol dehydrogenase (448 aa).

Residues Y136, Q197, and N220 each contribute to the NAD(+) site. Residues S243, Q265, and H268 each contribute to the substrate site. The Zn(2+) site is built by Q265 and H268. Residues E333 and H334 each act as proton acceptor in the active site. Residues H334, D367, E421, and H426 each coordinate substrate. Position 367 (D367) interacts with Zn(2+). H426 lines the Zn(2+) pocket.

Belongs to the histidinol dehydrogenase family. Requires Zn(2+) as cofactor.

It carries out the reaction L-histidinol + 2 NAD(+) + H2O = L-histidine + 2 NADH + 3 H(+). It functions in the pathway amino-acid biosynthesis; L-histidine biosynthesis; L-histidine from 5-phospho-alpha-D-ribose 1-diphosphate: step 9/9. Its function is as follows. Catalyzes the sequential NAD-dependent oxidations of L-histidinol to L-histidinaldehyde and then to L-histidine. The chain is Histidinol dehydrogenase from Pseudomonas savastanoi pv. phaseolicola (strain 1448A / Race 6) (Pseudomonas syringae pv. phaseolicola (strain 1448A / Race 6)).